Reading from the N-terminus, the 542-residue chain is CTP synthase (542 aa).

Residues 1–265 are amidoligase domain; the sequence is MARYVFITGG…DSEVLSAFGI (265 aa). Ser-13 contacts CTP. Ser-13 serves as a coordination point for UTP. 14–19 is a binding site for ATP; sequence SLGKGI. L-glutamine is bound at residue Tyr-54. An ATP-binding site is contributed by Asp-71. Residues Asp-71 and Glu-139 each coordinate Mg(2+). CTP-binding positions include 146–148, 186–191, and Lys-222; these read DIE and KTKPTQ. Residues 186 to 191 and Lys-222 contribute to the UTP site; that span reads KTKPTQ. The region spanning 291 to 541 is the Glutamine amidotransferase type-1 domain; that stretch reads TIAVVGKYTG…IEAAIEQSRL (251 aa). Gly-353 contacts L-glutamine. The active-site Nucleophile; for glutamine hydrolysis is the Cys-380. L-glutamine-binding positions include 381-384, Glu-404, and Arg-469; that span reads FGMQ. Active-site residues include His-514 and Glu-516.

It belongs to the CTP synthase family. Homotetramer.

The catalysed reaction is UTP + L-glutamine + ATP + H2O = CTP + L-glutamate + ADP + phosphate + 2 H(+). It catalyses the reaction L-glutamine + H2O = L-glutamate + NH4(+). It carries out the reaction UTP + NH4(+) + ATP = CTP + ADP + phosphate + 2 H(+). It participates in pyrimidine metabolism; CTP biosynthesis via de novo pathway; CTP from UDP: step 2/2. Allosterically activated by GTP, when glutamine is the substrate; GTP has no effect on the reaction when ammonia is the substrate. The allosteric effector GTP functions by stabilizing the protein conformation that binds the tetrahedral intermediate(s) formed during glutamine hydrolysis. Inhibited by the product CTP, via allosteric rather than competitive inhibition. Its function is as follows. Catalyzes the ATP-dependent amination of UTP to CTP with either L-glutamine or ammonia as the source of nitrogen. Regulates intracellular CTP levels through interactions with the four ribonucleotide triphosphates. In Brucella melitensis biotype 1 (strain ATCC 23456 / CCUG 17765 / NCTC 10094 / 16M), this protein is CTP synthase.